The following is a 168-amino-acid chain: Ubiquitin-fold modifier-conjugating enzyme 1 (168 aa).

The Glycyl thioester intermediate role is filled by C119.

It belongs to the ubiquitin-conjugating enzyme family. UFC1 subfamily.

Its function is as follows. E2-like enzyme which forms an intermediate with UFM1 via a thioester linkage. The sequence is that of Ubiquitin-fold modifier-conjugating enzyme 1 from Drosophila grimshawi (Hawaiian fruit fly).